A 480-amino-acid polypeptide reads, in one-letter code: tRNA-2-methylthio-N(6)-dimethylallyladenosine synthase (480 aa).

One can recognise an MTTase N-terminal domain in the interval 32–149; the sequence is RKLYIRTFGC…LPELIRRRRA (118 aa). Residues Cys-41, Cys-78, Cys-112, Cys-186, Cys-190, and Cys-193 each contribute to the [4Fe-4S] cluster site. A Radical SAM core domain is found at 172–405; sequence RIEGATAFVS…QALINAQAAA (234 aa). One can recognise a TRAM domain in the interval 408–471; it reads QAMVGTRQRL…PNSLRARVAD (64 aa).

The protein belongs to the methylthiotransferase family. MiaB subfamily. Monomer. [4Fe-4S] cluster serves as cofactor.

It localises to the cytoplasm. It catalyses the reaction N(6)-dimethylallyladenosine(37) in tRNA + (sulfur carrier)-SH + AH2 + 2 S-adenosyl-L-methionine = 2-methylsulfanyl-N(6)-dimethylallyladenosine(37) in tRNA + (sulfur carrier)-H + 5'-deoxyadenosine + L-methionine + A + S-adenosyl-L-homocysteine + 2 H(+). Catalyzes the methylthiolation of N6-(dimethylallyl)adenosine (i(6)A), leading to the formation of 2-methylthio-N6-(dimethylallyl)adenosine (ms(2)i(6)A) at position 37 in tRNAs that read codons beginning with uridine. The protein is tRNA-2-methylthio-N(6)-dimethylallyladenosine synthase of Bordetella petrii (strain ATCC BAA-461 / DSM 12804 / CCUG 43448).